The chain runs to 140 residues: 3-hydroxyacyl-[acyl-carrier-protein] dehydratase FabZ (140 aa).

Histidine 47 is a catalytic residue.

It belongs to the thioester dehydratase family. FabZ subfamily.

It localises to the cytoplasm. It catalyses the reaction a (3R)-hydroxyacyl-[ACP] = a (2E)-enoyl-[ACP] + H2O. Its function is as follows. Involved in unsaturated fatty acids biosynthesis. Catalyzes the dehydration of short chain beta-hydroxyacyl-ACPs and long chain saturated and unsaturated beta-hydroxyacyl-ACPs. The polypeptide is 3-hydroxyacyl-[acyl-carrier-protein] dehydratase FabZ (Streptococcus pneumoniae (strain 70585)).